We begin with the raw amino-acid sequence, 334 residues long: Deoxyhypusine synthase (334 aa).

NAD(+) contacts are provided by residues 73 to 77 (SNIIS), 99 to 101 (TGG), glutamate 105, and aspartate 207. Residue 104-105 (EE) participates in spermidine binding. The spermidine site is built by aspartate 212 and histidine 256. An NAD(+)-binding site is contributed by 276–277 (NA). Spermidine-binding positions include 282–284 (GSD) and 291–297 (EAVSWGK). The Nucleophile role is filled by lysine 297. 310–311 (DA) is an NAD(+) binding site.

Belongs to the deoxyhypusine synthase family. It depends on NAD(+) as a cofactor.

It carries out the reaction [eIF5A protein]-L-lysine + spermidine = [eIF5A protein]-deoxyhypusine + propane-1,3-diamine. It functions in the pathway protein modification; eIF5A hypusination. In terms of biological role, catalyzes the NAD-dependent oxidative cleavage of spermidine and the subsequent transfer of the butylamine moiety of spermidine to the epsilon-amino group of a specific lysine residue of the eIF-5A precursor protein to form the intermediate deoxyhypusine residue. This is Deoxyhypusine synthase (DYS1) from Encephalitozoon cuniculi (strain GB-M1) (Microsporidian parasite).